We begin with the raw amino-acid sequence, 142 residues long: Large-conductance mechanosensitive channel (142 aa).

The next 2 helical transmembrane spans lie at 14–34 (VVDL…VSSL) and 86–106 (FGQF…VFLV).

It belongs to the MscL family. As to quaternary structure, homopentamer.

Its subcellular location is the cell inner membrane. In terms of biological role, channel that opens in response to stretch forces in the membrane lipid bilayer. May participate in the regulation of osmotic pressure changes within the cell. The chain is Large-conductance mechanosensitive channel from Rhizorhabdus wittichii (strain DSM 6014 / CCUG 31198 / JCM 15750 / NBRC 105917 / EY 4224 / RW1) (Sphingomonas wittichii).